The sequence spans 314 residues: tRNA dimethylallyltransferase (314 aa).

36–43 is a binding site for ATP; the sequence is GPTASGKT. Substrate is bound at residue 38 to 43; it reads TASGKT. The segment at 61-64 is interaction with substrate tRNA; it reads DSVQ.

It belongs to the IPP transferase family. Monomer. It depends on Mg(2+) as a cofactor.

It carries out the reaction adenosine(37) in tRNA + dimethylallyl diphosphate = N(6)-dimethylallyladenosine(37) in tRNA + diphosphate. In terms of biological role, catalyzes the transfer of a dimethylallyl group onto the adenine at position 37 in tRNAs that read codons beginning with uridine, leading to the formation of N6-(dimethylallyl)adenosine (i(6)A). The protein is tRNA dimethylallyltransferase of Sorangium cellulosum (strain So ce56) (Polyangium cellulosum (strain So ce56)).